A 504-amino-acid chain; its full sequence is MTAVDTPDLLDYDEVLAKYEPVLGMEVHVELGTNTKMFCPCPTEFGAEPNTQVCPVCLGLPGSLPVVNEAAVESAIRIGLALNCSITPWGRFARKNYFYPDQPKNYQISQYDEPIATDGYLDVVLDDGTTWRVEIERAHMEEDTGKSLHVGGATGRIHGASHSLLDYNRAGVPLVEIVTKTISGAGARAPEVARAYVTALRDLLKSLNVSDVRMDQGSMRCDANASLMPIGATELGTRTETKNVNSLKSVEVAVRYEMRRQAAVLEAGGEVIQETRHFQEADGTTSPGRRKETAEDYRYFPEPDLEPVAPSAEWVEELRGTLPELPWVRRARIQADWGVSDEVMRDLVNANALDLVIATVEAGASPEAARSWWVSYLAQQANTRGVELGELPITPAQVAQVVALIDSGKLNNKVARQVVDHVLAGEGDPEQVVADHPELVVERDDTKLKAAVDEALAANPDIAEKIRGGKVAAAGKIVGDVMKATRGQADPARVKELVIEACGG.

It belongs to the GatB/GatE family. GatB subfamily. As to quaternary structure, heterotrimer of A, B and C subunits.

It catalyses the reaction L-glutamyl-tRNA(Gln) + L-glutamine + ATP + H2O = L-glutaminyl-tRNA(Gln) + L-glutamate + ADP + phosphate + H(+). The enzyme catalyses L-aspartyl-tRNA(Asn) + L-glutamine + ATP + H2O = L-asparaginyl-tRNA(Asn) + L-glutamate + ADP + phosphate + 2 H(+). Its function is as follows. Allows the formation of correctly charged Asn-tRNA(Asn) or Gln-tRNA(Gln) through the transamidation of misacylated Asp-tRNA(Asn) or Glu-tRNA(Gln) in organisms which lack either or both of asparaginyl-tRNA or glutaminyl-tRNA synthetases. The reaction takes place in the presence of glutamine and ATP through an activated phospho-Asp-tRNA(Asn) or phospho-Glu-tRNA(Gln). This is Aspartyl/glutamyl-tRNA(Asn/Gln) amidotransferase subunit B from Rhodococcus opacus (strain B4).